The sequence spans 856 residues: Subtilisin-like protease SBT2.2 (856 aa).

The signal sequence occupies residues 1 to 21; it reads MRRVLMVNFGVLLLFCFGVLS. The propeptide at 22–159 is activation peptide; the sequence is NSFGQDNGGD…IVLDFSVRTA (138 aa). 2 N-linked (GlcNAc...) asparagine glycosylation sites follow: Asn35 and Asn85. In terms of domain architecture, Inhibitor I9 spans 40 to 159; it reads VYIVTLRQAS…IVLDFSVRTA (120 aa). The Peptidase S8 domain occupies 164 to 709; sequence PQFMGLPKGA…NGFVNATAAL (546 aa). Asp193 serves as the catalytic Charge relay system. N-linked (GlcNAc...) asparagine glycosylation is found at Asn204 and Asn255. Residue His269 is the Charge relay system of the active site. N-linked (GlcNAc...) asparagine glycosylation is found at Asn412, Asn441, Asn495, Asn540, and Asn568. The 97-residue stretch at 432-528 folds into the PA domain; the sequence is MISALDALKN…MDMPGIIIPS (97 aa). The active-site Charge relay system is Ser634. 7 N-linked (GlcNAc...) asparagine glycosylation sites follow: Asn704, Asn730, Asn738, Asn748, Asn767, Asn782, and Asn823.

It belongs to the peptidase S8 family.

It localises to the secreted. The chain is Subtilisin-like protease SBT2.2 from Arabidopsis thaliana (Mouse-ear cress).